We begin with the raw amino-acid sequence, 732 residues long: 1,4-alpha-glucan branching enzyme GlgB 1 (732 aa).

Aspartate 411 acts as the Nucleophile in catalysis. The Proton donor role is filled by glutamate 464.

The protein belongs to the glycosyl hydrolase 13 family. GlgB subfamily. In terms of assembly, monomer.

It carries out the reaction Transfers a segment of a (1-&gt;4)-alpha-D-glucan chain to a primary hydroxy group in a similar glucan chain.. It functions in the pathway glycan biosynthesis; glycogen biosynthesis. Catalyzes the formation of the alpha-1,6-glucosidic linkages in glycogen by scission of a 1,4-alpha-linked oligosaccharide from growing alpha-1,4-glucan chains and the subsequent attachment of the oligosaccharide to the alpha-1,6 position. The polypeptide is 1,4-alpha-glucan branching enzyme GlgB 1 (Xanthomonas euvesicatoria pv. vesicatoria (strain 85-10) (Xanthomonas campestris pv. vesicatoria)).